A 1050-amino-acid polypeptide reads, in one-letter code: Isoleucine--tRNA ligase (1050 aa).

Residues 45 to 56 (PYPSSPIPHIGT) carry the 'HIGH' region motif. The 'KMSKS' region signature appears at 594–598 (EMHKS). Lys-597 lines the ATP pocket.

Belongs to the class-I aminoacyl-tRNA synthetase family. IleS type 2 subfamily. Monomer. The cofactor is Zn(2+).

Its subcellular location is the cytoplasm. The enzyme catalyses tRNA(Ile) + L-isoleucine + ATP = L-isoleucyl-tRNA(Ile) + AMP + diphosphate. Catalyzes the attachment of isoleucine to tRNA(Ile). As IleRS can inadvertently accommodate and process structurally similar amino acids such as valine, to avoid such errors it has two additional distinct tRNA(Ile)-dependent editing activities. One activity is designated as 'pretransfer' editing and involves the hydrolysis of activated Val-AMP. The other activity is designated 'posttransfer' editing and involves deacylation of mischarged Val-tRNA(Ile). This is Isoleucine--tRNA ligase from Sulfolobus acidocaldarius (strain ATCC 33909 / DSM 639 / JCM 8929 / NBRC 15157 / NCIMB 11770).